A 469-amino-acid polypeptide reads, in one-letter code: Properdin (469 aa).

An N-terminal signal peptide occupies residues 1–27 (MITEGAQAPRLLLPPLLLLLTLPATGS). TSP type-1 domains are found at residues 28–76 (DPVL…QPCR), 77–134 (SPRW…QCCP), 136–191 (MGGW…QVCP), 193–255 (HGAW…PPCP), 257–313 (AGGW…VPCP), 315–377 (DGEW…QHCP), and 379–462 (KGSW…PACK). Intrachain disulfides connect C32-C56, C43-C72, and C57-C75. 2 C-linked (Man) tryptophan glycosylation sites follow: W83 and W86. Intrachain disulfides connect C89–C127, C93–C133, C104–C111, C132–C170, C148–C184, C152–C190, and C163–C174. T92 carries an O-linked (Fuc...) threonine glycan. C-linked (Man) tryptophan glycosylation is found at W139, W142, and W145. An O-linked (Fuc...) threonine glycan is attached at T151. C-linked (Man) tryptophan glycosylation is found at W196, W199, and W202. Intrachain disulfides connect C205/C248, C209/C254, and C224/C238. S208 carries O-linked (Fuc...) serine glycosylation. The disordered stretch occupies residues 219 to 238 (TRSRKCSAPEPSQKPPGKPC). W260 and W263 each carry a C-linked (Man) tryptophan glycan. 3 disulfide bridges follow: C269–C306, C273–C312, and C284–C296. T272 is a glycosylation site (O-linked (Fuc...) threonine). 2 C-linked (Man) tryptophan glycosylation sites follow: W321 and W324. Intrachain disulfides connect C327–C370, C337–C376, and C350–C360. Residues 351-359 (RGRKFDGHR) form an interaction with Complement C3 beta chain region. C-linked (Man) tryptophan glycans are attached at residues W382, W385, and W388. Intrachain disulfides connect C391–C455, C395–C461, and C407–C439. An N-linked (GlcNAc...) (complex) asparagine glycan is attached at N428.

In terms of assembly, in plasma, properdin exists as dimers, trimers or tetramers in the relative proportions of 26:54:20. Interacts with the pro-C3-convertase enzyme complex (C3b-Bb) comprised of Complement C3 beta chain (C3b) and the Complement factor B Bb fragment (Bb), where it binds (via its TSP type-1 5 domain) with C3b and Bb. This interaction stabilizes the complex and allows it to become the active C3-convertase enzyme complex (C3b-Bb-FP). Interacts with C3b. Interacts with CFB.

The protein localises to the secreted. Its function is as follows. A positive regulator of the alternate pathway (AP) of complement. It binds to and stabilizes the C3- and C5-convertase enzyme complexes. Inhibits CFI-CFH mediated degradation of Complement C3 beta chain (C3b). The polypeptide is Properdin (Homo sapiens (Human)).